The chain runs to 399 residues: Elongation factor Tu (399 aa).

Positions 10-209 (KPHVNIGTIG…AVDDYIPTPA (200 aa)) constitute a tr-type G domain. Residues 19 to 26 (GHVDHGKT) form a G1 region. 19-26 (GHVDHGKT) is a binding site for GTP. Thr26 lines the Mg(2+) pocket. Residues 60 to 64 (GITIA) are G2. The tract at residues 81-84 (DCPG) is G3. Residues 81-85 (DCPGH) and 136-139 (NKAD) contribute to the GTP site. Residues 136–139 (NKAD) form a G4 region. The tract at residues 174–176 (SAL) is G5.

The protein belongs to the TRAFAC class translation factor GTPase superfamily. Classic translation factor GTPase family. EF-Tu/EF-1A subfamily. As to quaternary structure, monomer.

The protein localises to the cytoplasm. The enzyme catalyses GTP + H2O = GDP + phosphate + H(+). In terms of biological role, GTP hydrolase that promotes the GTP-dependent binding of aminoacyl-tRNA to the A-site of ribosomes during protein biosynthesis. In Campylobacter lari (strain RM2100 / D67 / ATCC BAA-1060), this protein is Elongation factor Tu.